The following is a 503-amino-acid chain: Aromatase 2 (503 aa).

Position 437 (C437) interacts with heme.

Belongs to the cytochrome P450 family. It depends on heme as a cofactor.

Its subcellular location is the membrane. It catalyses the reaction testosterone + 3 reduced [NADPH--hemoprotein reductase] + 3 O2 = 17beta-estradiol + formate + 3 oxidized [NADPH--hemoprotein reductase] + 4 H2O + 4 H(+). The enzyme catalyses androst-4-ene-3,17-dione + 3 reduced [NADPH--hemoprotein reductase] + 3 O2 = estrone + formate + 3 oxidized [NADPH--hemoprotein reductase] + 4 H2O + 4 H(+). Its function is as follows. Catalyzes the formation of aromatic C18 estrogens from C19 androgens. The sequence is that of Aromatase 2 (CYP19A2) from Sus scrofa (Pig).